The primary structure comprises 503 residues: ATP-dependent RNA helicase dbp3 (503 aa).

A compositionally biased stretch (basic and acidic residues) spans 1-13 (MGKRVSHNEGADR). The interval 1-37 (MGKRVSHNEGADRRPKKKAKNEKPEKETMESPAADVT) is disordered. The Q motif signature appears at 104–112 (SFASPTPIQ). In terms of domain architecture, Helicase ATP-binding spans 116 to 292 (WPLLFAGRDV…ATFMTSAVTV (177 aa)). 129–136 (AETGSGKT) contributes to the ATP binding site. Residues 239 to 242 (DEAD) carry the DEAD box motif. One can recognise a Helicase C-terminal domain in the interval 323–472 (RLVQLLSENQ…EVPQELLKFG (150 aa)).

It belongs to the DEAD box helicase family. DDX5/DBP2 subfamily.

It is found in the nucleus. Its subcellular location is the nucleolus. It carries out the reaction ATP + H2O = ADP + phosphate + H(+). In terms of biological role, ATP-dependent RNA helicase required for 60S ribosomal subunit synthesis. Involved in efficient pre-rRNA processing, predominantly at site A3, which is necessary for the normal formation of 25S and 5.8S rRNAs. The chain is ATP-dependent RNA helicase dbp3 (dbp3) from Aspergillus clavatus (strain ATCC 1007 / CBS 513.65 / DSM 816 / NCTC 3887 / NRRL 1 / QM 1276 / 107).